The primary structure comprises 87 residues: Putative regulatory protein GTNG_1019 (87 aa).

Belongs to the RemA family.

The polypeptide is Putative regulatory protein GTNG_1019 (Geobacillus thermodenitrificans (strain NG80-2)).